Consider the following 192-residue polypeptide: Nucleoside triphosphate pyrophosphatase (192 aa).

D73 (proton acceptor) is an active-site residue.

Belongs to the Maf family. It depends on a divalent metal cation as a cofactor.

Its subcellular location is the cytoplasm. It catalyses the reaction a ribonucleoside 5'-triphosphate + H2O = a ribonucleoside 5'-phosphate + diphosphate + H(+). The catalysed reaction is a 2'-deoxyribonucleoside 5'-triphosphate + H2O = a 2'-deoxyribonucleoside 5'-phosphate + diphosphate + H(+). In terms of biological role, nucleoside triphosphate pyrophosphatase. May have a dual role in cell division arrest and in preventing the incorporation of modified nucleotides into cellular nucleic acids. The sequence is that of Nucleoside triphosphate pyrophosphatase from Ehrlichia chaffeensis (strain ATCC CRL-10679 / Arkansas).